The chain runs to 385 residues: UPF0744 protein YSD83 (385 aa).

It belongs to the UPF0744 family.

The protein is UPF0744 protein YSD83 (YSD83) of Saccharomyces paradoxus (Yeast).